We begin with the raw amino-acid sequence, 24 residues long: Chlorate reductase subunit beta (24 aa).

In terms of assembly, heterotrimer of alpha, beta and gamma subunits. Requires [3Fe-4S] cluster as cofactor. [4Fe-4S] cluster is required as a cofactor.

It localises to the cytoplasm. In terms of biological role, electron transfer subunit of the chlorate reductase. The protein is Chlorate reductase subunit beta of Stutzerimonas chloritidismutans (Pseudomonas chloritidismutans).